A 123-amino-acid polypeptide reads, in one-letter code: uncharacterized protein (123 aa).

The next 2 helical transmembrane spans lie at 1 to 21 (MVLP…AVGC) and 103 to 123 (LESS…ILLF).

Its subcellular location is the membrane. This is an uncharacterized protein from Saccharomyces cerevisiae (strain ATCC 204508 / S288c) (Baker's yeast).